A 309-amino-acid polypeptide reads, in one-letter code: Transcription elongation factor S-II (309 aa).

In terms of domain architecture, TFIIS N-terminal spans 5-79; the sequence is EVLVHVKNLE…SSWKDAINKN (75 aa). The disordered stretch occupies residues 78 to 142; that stretch reads KNKRSRQAQQ…NSKNDGVDTA (65 aa). The segment covering 88-102 has biased composition (basic and acidic residues); that stretch reads HHQDHAPGNAEDKTT. Residues 103–120 show a composition bias toward polar residues; that stretch reads VGESVNGVQQPASSQSDA. Position 116 is a phosphoserine (Ser-116). The 117-residue stretch at 148-264 folds into the TFIIS central domain; the sequence is LRDQVLKALY…NAQGATIERS (117 aa). The TFIIS-type zinc finger occupies 267 to 307; it reads DRFTCGKCKEKKVSYYQLQTRSADEPLTTFCTCEACGNRWK. Zn(2+) contacts are provided by Cys-271, Cys-274, Cys-299, and Cys-302.

This sequence belongs to the TFS-II family.

It localises to the nucleus. Necessary for efficient RNA polymerase II transcription elongation past template-encoded arresting sites. The arresting sites in DNA have the property of trapping a certain fraction of elongating RNA polymerases that pass through, resulting in locked ternary complexes. Cleavage of the nascent transcript by S-II allows the resumption of elongation from the new 3'-terminus. Functionally, can promote the transfer of one strand of a double-stranded DNA molecule to a homologous single strand and thus may be involved in recombination. The sequence is that of Transcription elongation factor S-II (DST1) from Saccharomyces cerevisiae (strain ATCC 204508 / S288c) (Baker's yeast).